The sequence spans 312 residues: tRNA pseudouridine synthase B (312 aa).

D48 functions as the Nucleophile in the catalytic mechanism.

The protein belongs to the pseudouridine synthase TruB family. Type 1 subfamily.

The enzyme catalyses uridine(55) in tRNA = pseudouridine(55) in tRNA. In terms of biological role, responsible for synthesis of pseudouridine from uracil-55 in the psi GC loop of transfer RNAs. In Haemophilus influenzae (strain ATCC 51907 / DSM 11121 / KW20 / Rd), this protein is tRNA pseudouridine synthase B.